Reading from the N-terminus, the 247-residue chain is 3-deoxy-manno-octulosonate cytidylyltransferase (247 aa).

Belongs to the KdsB family.

The protein localises to the cytoplasm. The enzyme catalyses 3-deoxy-alpha-D-manno-oct-2-ulosonate + CTP = CMP-3-deoxy-beta-D-manno-octulosonate + diphosphate. It participates in nucleotide-sugar biosynthesis; CMP-3-deoxy-D-manno-octulosonate biosynthesis; CMP-3-deoxy-D-manno-octulosonate from 3-deoxy-D-manno-octulosonate and CTP: step 1/1. The protein operates within bacterial outer membrane biogenesis; lipopolysaccharide biosynthesis. In terms of biological role, activates KDO (a required 8-carbon sugar) for incorporation into bacterial lipopolysaccharide in Gram-negative bacteria. The chain is 3-deoxy-manno-octulosonate cytidylyltransferase from Methylobacterium sp. (strain 4-46).